Reading from the N-terminus, the 369-residue chain is Forkhead box protein I2-A (369 aa).

Positions Arg-124–Lys-218 form a DNA-binding region, fork-head. Residues Arg-215–Ala-252 are disordered.

In terms of tissue distribution, localized to the animal hemisphere of early cleavage stage embryos. Zygotic expression is restricted to the dorsal part of the epibranchial placodes of the head within a region located near the tip of the first, second and third visceral pouch.

It is found in the nucleus. Its function is as follows. Possible transcriptional activator. The protein is Forkhead box protein I2-A (foxi2-a) of Xenopus laevis (African clawed frog).